A 333-amino-acid polypeptide reads, in one-letter code: DNA-directed RNA polymerase subunit alpha (333 aa).

Residues 1–234 are alpha N-terminal domain (alpha-NTD); sequence MQISVNEFLT…QQLAAFVDLK (234 aa). Positions 248-333 are alpha C-terminal domain (alpha-CTD); the sequence is IDPILLRPVD…SLKKDDKATA (86 aa).

Belongs to the RNA polymerase alpha chain family. As to quaternary structure, homodimer. The RNAP catalytic core consists of 2 alpha, 1 beta, 1 beta' and 1 omega subunit. When a sigma factor is associated with the core the holoenzyme is formed, which can initiate transcription.

It carries out the reaction RNA(n) + a ribonucleoside 5'-triphosphate = RNA(n+1) + diphosphate. Functionally, DNA-dependent RNA polymerase catalyzes the transcription of DNA into RNA using the four ribonucleoside triphosphates as substrates. This is DNA-directed RNA polymerase subunit alpha from Pseudomonas fluorescens (strain Pf0-1).